The chain runs to 169 residues: X polypeptide (169 aa).

Belongs to the IagB/IpgF/P19 family.

This is X polypeptide (yubQ) from Escherichia coli (strain K12).